A 458-amino-acid polypeptide reads, in one-letter code: tRNA modification GTPase MnmE (458 aa).

3 residues coordinate (6S)-5-formyl-5,6,7,8-tetrahydrofolate: Arg-28, Glu-85, and Lys-124. The TrmE-type G domain maps to Gly-220–Gly-381. Asn-230 is a binding site for K(+). GTP is bound by residues Asn-230 to Ser-235, Thr-249 to Thr-255, and Asp-274 to Gly-277. Residue Ser-234 participates in Mg(2+) binding. K(+) contacts are provided by Thr-249, Ile-251, and Thr-254. Mg(2+) is bound at residue Thr-255. Position 458 (Lys-458) interacts with (6S)-5-formyl-5,6,7,8-tetrahydrofolate.

It belongs to the TRAFAC class TrmE-Era-EngA-EngB-Septin-like GTPase superfamily. TrmE GTPase family. In terms of assembly, homodimer. Heterotetramer of two MnmE and two MnmG subunits. K(+) is required as a cofactor.

It localises to the cytoplasm. In terms of biological role, exhibits a very high intrinsic GTPase hydrolysis rate. Involved in the addition of a carboxymethylaminomethyl (cmnm) group at the wobble position (U34) of certain tRNAs, forming tRNA-cmnm(5)s(2)U34. This Chromohalobacter salexigens (strain ATCC BAA-138 / DSM 3043 / CIP 106854 / NCIMB 13768 / 1H11) protein is tRNA modification GTPase MnmE.